A 564-amino-acid polypeptide reads, in one-letter code: Potassium-transporting ATPase potassium-binding subunit (564 aa).

Transmembrane regions (helical) follow at residues 7-27 (LLIL…GRFF), 67-87 (AWAL…MLML), 135-155 (VGLT…LVAL), 179-199 (LYAL…QGVP), 258-278 (FELV…GHYV), 286-306 (AILG…LWAE), 382-402 (VGLN…GLMI), 420-440 (LLVA…AIAA), 487-507 (LMLS…VLAL), and 528-548 (GLLF…LTFL).

The protein belongs to the KdpA family. As to quaternary structure, the system is composed of three essential subunits: KdpA, KdpB and KdpC.

The protein localises to the cell inner membrane. Part of the high-affinity ATP-driven potassium transport (or Kdp) system, which catalyzes the hydrolysis of ATP coupled with the electrogenic transport of potassium into the cytoplasm. This subunit binds the periplasmic potassium ions and delivers the ions to the membrane domain of KdpB through an intramembrane tunnel. This chain is Potassium-transporting ATPase potassium-binding subunit, found in Pseudomonas syringae pv. tomato (strain ATCC BAA-871 / DC3000).